Here is a 428-residue protein sequence, read N- to C-terminus: Glutamate-1-semialdehyde 2,1-aminomutase 1 (428 aa).

Lysine 268 carries the post-translational modification N6-(pyridoxal phosphate)lysine.

Belongs to the class-III pyridoxal-phosphate-dependent aminotransferase family. HemL subfamily. Homodimer. Pyridoxal 5'-phosphate is required as a cofactor.

The protein localises to the cytoplasm. It catalyses the reaction (S)-4-amino-5-oxopentanoate = 5-aminolevulinate. The protein operates within porphyrin-containing compound metabolism; protoporphyrin-IX biosynthesis; 5-aminolevulinate from L-glutamyl-tRNA(Glu): step 2/2. This Geobacillus thermodenitrificans (strain NG80-2) protein is Glutamate-1-semialdehyde 2,1-aminomutase 1.